Consider the following 355-residue polypeptide: Histidine biosynthesis bifunctional protein HisB (355 aa).

Residues 1 to 166 (MKQKILFIDR…DITKEIIKRN (166 aa)) form a histidinol-phosphatase region. The active-site Nucleophile is the aspartate 9. Mg(2+)-binding residues include aspartate 9 and aspartate 11. Aspartate 11 (proton donor) is an active-site residue. Zn(2+) contacts are provided by cysteine 93, histidine 95, cysteine 101, and cysteine 103. Residue aspartate 130 coordinates Mg(2+). The tract at residues 167 to 355 (RYREVIRETK…NTLPTSKGIL (189 aa)) is imidazoleglycerol-phosphate dehydratase.

In the N-terminal section; belongs to the histidinol-phosphatase family. This sequence in the C-terminal section; belongs to the imidazoleglycerol-phosphate dehydratase family. Requires Mg(2+) as cofactor. The cofactor is Zn(2+).

It is found in the cytoplasm. It catalyses the reaction D-erythro-1-(imidazol-4-yl)glycerol 3-phosphate = 3-(imidazol-4-yl)-2-oxopropyl phosphate + H2O. The catalysed reaction is L-histidinol phosphate + H2O = L-histidinol + phosphate. Its pathway is amino-acid biosynthesis; L-histidine biosynthesis; L-histidine from 5-phospho-alpha-D-ribose 1-diphosphate: step 6/9. It functions in the pathway amino-acid biosynthesis; L-histidine biosynthesis; L-histidine from 5-phospho-alpha-D-ribose 1-diphosphate: step 8/9. This Buchnera aphidicola subsp. Schizaphis graminum (strain Sg) protein is Histidine biosynthesis bifunctional protein HisB.